We begin with the raw amino-acid sequence, 322 residues long: Transcription factor Atoh8 (322 aa).

3 disordered regions span residues 77-96 (PVPA…DTAR), 101-144 (IRAP…EAHS), and 159-221 (PPAR…ATAA). Basic and acidic residues predominate over residues 101–111 (IRAPEVSDARK). The segment at 231–244 (TRRLLANARERTRV) is basic motif; degenerate. The region spanning 231–283 (TRRLLANARERTRVHTISAAFEALRKQVPCYSYGQKLSKLAILRIACNYILSL) is the bHLH domain. The segment at 245–283 (HTISAAFEALRKQVPCYSYGQKLSKLAILRIACNYILSL) is helix-loop-helix motif.

Efficient DNA binding requires dimerization with another bHLH protein. Interacts with NEUROG3 and NEUROD1. Interacts with ZFPM2; mediates indirect interaction with GATA4. Forms a heterodimer with TCF3; repress transcription of TCF3 and TCF3/NEUROG3 dimer-induced transactivation of E box-dependent promoters. As to expression, expressed by subsets of mature neurons. Expressed in kidney (podocytes). Expression is restricted to the atria, lung mesenchyme, and vascular smooth muscle.

It localises to the nucleus. The protein localises to the nucleus speckle. Its subcellular location is the cytoplasm. Transcription factor that binds a palindromic (canonical) core consensus DNA sequence 5'-CANNTG- 3' known as an E-box element, possibly as a heterodimer with other bHLH proteins. Regulates endothelial cell proliferation, migration and tube-like structures formation. Modulates endothelial cell differentiation through NOS3. May be implicated in specification and differentiation of neuronal cell lineages in the brain. May participate in kidney development and may be involved in podocyte differentiation. During early embryonic development is involved in tissue-specific differentiation processes that are dependent on class II bHLH factors and namely modulates the differentiation program initiated by the pro-endocrine factor NEUROG3. During myogenesis, may play a role during the transition of myoblasts from the proliferative phase to the differentiation phase. Positively regulates HAMP transcription in two ways, firstly by acting directly on the HAMP promoter via E-boxes binding and indirectly through increased phosphorylation of SMAD protein complex. Repress NEUROG3-dependent gene activation in a gene-specific manner through at least two mechanisms; requires only either the sequestering of a general partner such as TCF3 through heterodimerization, either also requires binding of the bHLH domain to DNA via a basic motif. This chain is Transcription factor Atoh8, found in Mus musculus (Mouse).